A 236-amino-acid chain; its full sequence is MSQDSFKSYILKKFNISFNDESLLTEALTQRNYLNEHPDEKGRDYQRLEFLGDSVMQMIVAEYLFKRYPDWHEGQLTEMRIAMVQTRSFAHFSRMVHLNEGIRLGKGEEMSGARDRDSLLEDIWEAFIGALYLDQGADVVRQFLNQTLFAAIDTDFFDRFIDFKSRLQERLQTKGSVDIDYQTEKEEQLSDNTQLFEASVSANDKELARGTGKSIKDAEKAAARAALKILEDNVNL.

One can recognise an RNase III domain in the interval 7–136 (KSYILKKFNI…FIGALYLDQG (130 aa)). Mg(2+) is bound at residue Glu49. The active site involves Asp53. Mg(2+)-binding residues include Asp122 and Glu125. Glu125 is an active-site residue. In terms of domain architecture, DRBM spans 162 to 232 (DFKSRLQERL…ARAALKILED (71 aa)).

Belongs to the ribonuclease III family. As to quaternary structure, homodimer. Mg(2+) is required as a cofactor.

The protein resides in the cytoplasm. It catalyses the reaction Endonucleolytic cleavage to 5'-phosphomonoester.. Digests double-stranded RNA. Involved in the processing of primary rRNA transcript to yield the immediate precursors to the large and small rRNAs (23S and 16S). Processes some mRNAs, and tRNAs when they are encoded in the rRNA operon. Processes pre-crRNA and tracrRNA of type II CRISPR loci if present in the organism. This chain is Ribonuclease 3, found in Leuconostoc mesenteroides subsp. mesenteroides (strain ATCC 8293 / DSM 20343 / BCRC 11652 / CCM 1803 / JCM 6124 / NCDO 523 / NBRC 100496 / NCIMB 8023 / NCTC 12954 / NRRL B-1118 / 37Y).